The following is a 917-amino-acid chain: Lipoxygenase 6, chloroplastic (917 aa).

The N-terminal 40 residues, 1–40 (MFVASPVKTNFNGVSLVKSPAFSALSCRKQHRVPISRQVR), are a transit peptide targeting the chloroplast. The segment covering 46 to 57 (EEKAVDQEDGKK) has biased composition (basic and acidic residues). The disordered stretch occupies residues 46-66 (EEKAVDQEDGKKSTNKPLINS). Positions 98 to 216 (ERFEHQLELF…DNPQARIIFR (119 aa)) constitute a PLAT domain. Residues 219 to 917 (PCLPSETPDG…GRGIPNSISI (699 aa)) form the Lipoxygenase domain. Residues H575, H580, H767, and N771 each coordinate Fe cation. Residues 880-904 (KDKKLKNRTGAGMPPYELLLPTSPH) are disordered. I917 is a Fe cation binding site.

This sequence belongs to the lipoxygenase family. It depends on Fe cation as a cofactor.

The protein localises to the plastid. It localises to the chloroplast. It catalyses the reaction (9Z,12Z)-octadecadienoate + O2 = (13S)-hydroperoxy-(9Z,11E)-octadecadienoate. The enzyme catalyses (9Z,12Z,15Z)-octadecatrienoate + O2 = (13S)-hydroperoxy-(9Z,11E,15Z)-octadecatrienoate. The protein operates within lipid metabolism; oxylipin biosynthesis. Plant lipoxygenases may be involved in a number of diverse aspects of plant physiology including growth and development, pest resistance, and senescence or responses to wounding. Catalyzes the hydroperoxidation of lipids containing a cis,cis-1,4-pentadiene structure. 13S-lipoxygenase that can use linolenic acid as substrates. In Arabidopsis thaliana (Mouse-ear cress), this protein is Lipoxygenase 6, chloroplastic.